The sequence spans 195 residues: MSLTTLGNHPKEEFALVEIATAILTEHKEAMPFSSLVQEIQEFLEVDAETFKSRLSQFYTDLNTDGSFISLGNNEWALRAWYPVDAIDESIHELDDEEDAPKRKKSAKKKVNVFADNASDDDVIDYNDDDPEDEDFGTVTDDDTETDDEETEVEVESDDESNEIDLSDDESIDANMTELSGGDDLDDLSDGDQEK.

Residues 14-81 (FALVEIATAI…GNNEWALRAW (68 aa)) enclose the HTH HARE-type domain. Composition is skewed to acidic residues over residues 120 to 172 (DDDV…DESI) and 181 to 195 (GGDD…DQEK). The segment at 120 to 195 (DDDVIDYNDD…DDLSDGDQEK (76 aa)) is disordered.

This sequence belongs to the RpoE family. As to quaternary structure, RNAP is composed of a core of 2 alpha, a beta and a beta' subunits. The core is associated with a delta subunit and one of several sigma factors.

Participates in both the initiation and recycling phases of transcription. In the presence of the delta subunit, RNAP displays an increased specificity of transcription, a decreased affinity for nucleic acids, and an increased efficiency of RNA synthesis because of enhanced recycling. This chain is Probable DNA-directed RNA polymerase subunit delta, found in Leuconostoc mesenteroides subsp. mesenteroides (strain ATCC 8293 / DSM 20343 / BCRC 11652 / CCM 1803 / JCM 6124 / NCDO 523 / NBRC 100496 / NCIMB 8023 / NCTC 12954 / NRRL B-1118 / 37Y).